The primary structure comprises 568 residues: Oxygen-dependent choline dehydrogenase (568 aa).

Residue 8–37 (DYIIIGAGSAGNTLAARLTEDAGVTVLLLE) coordinates FAD. His-477 acts as the Proton acceptor in catalysis.

Belongs to the GMC oxidoreductase family. The cofactor is FAD.

The enzyme catalyses choline + A = betaine aldehyde + AH2. It carries out the reaction betaine aldehyde + NAD(+) + H2O = glycine betaine + NADH + 2 H(+). It participates in amine and polyamine biosynthesis; betaine biosynthesis via choline pathway; betaine aldehyde from choline (cytochrome c reductase route): step 1/1. In terms of biological role, involved in the biosynthesis of the osmoprotectant glycine betaine. Catalyzes the oxidation of choline to betaine aldehyde and betaine aldehyde to glycine betaine at the same rate. In Pseudomonas savastanoi pv. phaseolicola (strain 1448A / Race 6) (Pseudomonas syringae pv. phaseolicola (strain 1448A / Race 6)), this protein is Oxygen-dependent choline dehydrogenase.